The sequence spans 710 residues: E3 ubiquitin-protein ligase TRIM9 (710 aa).

An RING-type zinc finger spans residues 10–50; it reads CPVCGSFYREPIILPCSHNICQACARNILVQTPESESPQSR. Phosphothreonine is present on Thr-41. A phosphoserine mark is found at Ser-44, Ser-46, Ser-49, and Ser-53. 2 B box-type zinc fingers span residues 163–212 and 224–266; these read AAAL…LVPP and RKVS…VKAL. Residues Cys-168, Cys-171, Cys-193, His-198, Cys-229, His-232, Cys-252, and His-258 each contribute to the Zn(2+) site. Positions 273 to 340 form a coiled coil; that stretch reads HKSQLSQALN…KAQLLARVNK (68 aa). Positions 374–432 constitute a COS domain; sequence IKENDPSGFLQISDALIRRVHLTEDQWGKGTLTPRMTTDFDLSLDNSPLLQSIHQLDFV. One can recognise a Fibronectin type-III domain in the interval 440-535; it reads VPATPILQLE…KTLVLQTSEV (96 aa). The region spanning 533 to 702 is the B30.2/SPRY domain; it reads SEVAWFAFDP…LHTGLQVPDF (170 aa).

This sequence belongs to the TRIM/RBCC family. In terms of assembly, interacts with SNAP25. Auto-ubiquitinated.

It is found in the cytoplasm. The protein localises to the cell projection. It localises to the dendrite. The protein resides in the cytoplasmic vesicle. Its subcellular location is the secretory vesicle. It is found in the synaptic vesicle. The protein localises to the synapse. It localises to the cytoskeleton. It carries out the reaction S-ubiquitinyl-[E2 ubiquitin-conjugating enzyme]-L-cysteine + [acceptor protein]-L-lysine = [E2 ubiquitin-conjugating enzyme]-L-cysteine + N(6)-ubiquitinyl-[acceptor protein]-L-lysine.. It participates in protein modification; protein ubiquitination. Its function is as follows. E3 ubiquitin-protein ligase which ubiquitinates itself in cooperation with an E2 enzyme UBE2D2/UBC4 and serves as a targeting signal for proteasomal degradation. May play a role in regulation of neuronal functions. May act as a regulator of synaptic vesicle exocytosis by controlling the availability of SNAP25 for the SNARE complex formation. In Bos taurus (Bovine), this protein is E3 ubiquitin-protein ligase TRIM9 (TRIM9).